The chain runs to 95 residues: Small ribosomal subunit protein uS15 (95 aa).

The protein belongs to the universal ribosomal protein uS15 family. Part of the 30S ribosomal subunit. Forms a bridge to the 50S subunit in the 70S ribosome, contacting the 23S rRNA.

Functionally, one of the primary rRNA binding proteins, it binds directly to 16S rRNA where it helps nucleate assembly of the platform of the 30S subunit by binding and bridging several RNA helices of the 16S rRNA. Forms an intersubunit bridge (bridge B4) with the 23S rRNA of the 50S subunit in the ribosome. The chain is Small ribosomal subunit protein uS15 from Streptomyces coelicolor (strain ATCC BAA-471 / A3(2) / M145).